The sequence spans 146 residues: 3-dehydroquinate dehydratase (146 aa).

Residue tyrosine 22 is the Proton acceptor of the active site. The substrate site is built by asparagine 73, histidine 79, and aspartate 86. Histidine 99 serves as the catalytic Proton donor. Substrate is bound by residues 100–101 (VS) and arginine 110.

The protein belongs to the type-II 3-dehydroquinase family. In terms of assembly, homododecamer.

The catalysed reaction is 3-dehydroquinate = 3-dehydroshikimate + H2O. The protein operates within metabolic intermediate biosynthesis; chorismate biosynthesis; chorismate from D-erythrose 4-phosphate and phosphoenolpyruvate: step 3/7. Functionally, catalyzes a trans-dehydration via an enolate intermediate. In Kineococcus radiotolerans (strain ATCC BAA-149 / DSM 14245 / SRS30216), this protein is 3-dehydroquinate dehydratase.